The primary structure comprises 279 residues: Biotin synthase (279 aa).

The region spanning 2–228 (KTIMLCAICS…ETRVMIAGGR (227 aa)) is the Radical SAM core domain. Positions 17, 21, and 24 each coordinate [4Fe-4S] cluster. [2Fe-2S] cluster is bound by residues C61, C96, C154, and R221.

The protein belongs to the radical SAM superfamily. Biotin synthase family. In terms of assembly, homodimer. The cofactor is [4Fe-4S] cluster. [2Fe-2S] cluster is required as a cofactor.

It carries out the reaction (4R,5S)-dethiobiotin + (sulfur carrier)-SH + 2 reduced [2Fe-2S]-[ferredoxin] + 2 S-adenosyl-L-methionine = (sulfur carrier)-H + biotin + 2 5'-deoxyadenosine + 2 L-methionine + 2 oxidized [2Fe-2S]-[ferredoxin]. The protein operates within cofactor biosynthesis; biotin biosynthesis; biotin from 7,8-diaminononanoate: step 2/2. Catalyzes the conversion of dethiobiotin (DTB) to biotin by the insertion of a sulfur atom into dethiobiotin via a radical-based mechanism. The sequence is that of Biotin synthase from Campylobacter concisus (strain 13826).